Consider the following 158-residue polypeptide: Small ribosomal subunit protein uS9 (158 aa).

Belongs to the universal ribosomal protein uS9 family.

The sequence is that of Small ribosomal subunit protein uS9 from Rhodopseudomonas palustris (strain BisA53).